Reading from the N-terminus, the 421-residue chain is UDP-N-acetylglucosamine 1-carboxyvinyltransferase 1 (421 aa).

A phosphoenolpyruvate-binding site is contributed by 22 to 23 (KN). R95 lines the UDP-N-acetyl-alpha-D-glucosamine pocket. C119 serves as the catalytic Proton donor. The residue at position 119 (C119) is a 2-(S-cysteinyl)pyruvic acid O-phosphothioketal. Residues 124–128 (RPIEQ), D308, and V330 contribute to the UDP-N-acetyl-alpha-D-glucosamine site.

It belongs to the EPSP synthase family. MurA subfamily.

Its subcellular location is the cytoplasm. It catalyses the reaction phosphoenolpyruvate + UDP-N-acetyl-alpha-D-glucosamine = UDP-N-acetyl-3-O-(1-carboxyvinyl)-alpha-D-glucosamine + phosphate. The protein operates within cell wall biogenesis; peptidoglycan biosynthesis. Cell wall formation. Adds enolpyruvyl to UDP-N-acetylglucosamine. In Staphylococcus aureus (strain bovine RF122 / ET3-1), this protein is UDP-N-acetylglucosamine 1-carboxyvinyltransferase 1.